The primary structure comprises 291 residues: Phosphate import ATP-binding protein PstB (291 aa).

The interval 1-21 (MANKQIIDKNDDLQAHTDRND) is disordered. Positions 45–286 (YSTKNLDLWY…PSDKQTEDYI (242 aa)) constitute an ABC transporter domain. 77–84 (GPSGCGKS) contacts ATP.

Belongs to the ABC transporter superfamily. Phosphate importer (TC 3.A.1.7) family. In terms of assembly, the complex is composed of two ATP-binding proteins (PstB), two transmembrane proteins (PstC and PstA) and a solute-binding protein (PstS).

Its subcellular location is the cell membrane. The enzyme catalyses phosphate(out) + ATP + H2O = ADP + 2 phosphate(in) + H(+). Its function is as follows. Part of the ABC transporter complex PstSACB involved in phosphate import. Responsible for energy coupling to the transport system. This is Phosphate import ATP-binding protein PstB from Staphylococcus saprophyticus subsp. saprophyticus (strain ATCC 15305 / DSM 20229 / NCIMB 8711 / NCTC 7292 / S-41).